We begin with the raw amino-acid sequence, 341 residues long: UDP-3-O-acylglucosamine N-acyltransferase (341 aa).

Residue H240 is the Proton acceptor of the active site.

Belongs to the transferase hexapeptide repeat family. LpxD subfamily. Homotrimer.

The catalysed reaction is a UDP-3-O-[(3R)-3-hydroxyacyl]-alpha-D-glucosamine + a (3R)-hydroxyacyl-[ACP] = a UDP-2-N,3-O-bis[(3R)-3-hydroxyacyl]-alpha-D-glucosamine + holo-[ACP] + H(+). It functions in the pathway bacterial outer membrane biogenesis; LPS lipid A biosynthesis. Functionally, catalyzes the N-acylation of UDP-3-O-acylglucosamine using 3-hydroxyacyl-ACP as the acyl donor. Is involved in the biosynthesis of lipid A, a phosphorylated glycolipid that anchors the lipopolysaccharide to the outer membrane of the cell. The protein is UDP-3-O-acylglucosamine N-acyltransferase of Cellvibrio japonicus (strain Ueda107) (Pseudomonas fluorescens subsp. cellulosa).